A 250-amino-acid polypeptide reads, in one-letter code: 5-oxoprolinase subunit A (250 aa).

Belongs to the LamB/PxpA family. Forms a complex composed of PxpA, PxpB and PxpC.

It catalyses the reaction 5-oxo-L-proline + ATP + 2 H2O = L-glutamate + ADP + phosphate + H(+). Its function is as follows. Catalyzes the cleavage of 5-oxoproline to form L-glutamate coupled to the hydrolysis of ATP to ADP and inorganic phosphate. The protein is 5-oxoprolinase subunit A of Pseudomonas fluorescens (strain ATCC BAA-477 / NRRL B-23932 / Pf-5).